The chain runs to 40 residues: Muscarinic m1-toxin3 (40 aa).

Cys-3 and Cys-24 form a disulfide bridge.

Belongs to the three-finger toxin family. Short-chain subfamily. Aminergic toxin sub-subfamily. In terms of assembly, monomer. Contains 4 disulfide bonds. As to expression, expressed by the venom gland.

It is found in the secreted. In terms of biological role, binds irreversibly and specifically to M1 (CHRM1) muscarinic acetylcholine receptors, blocking further binding of antagonists and preventing the action of agonists. In Dendroaspis angusticeps (Eastern green mamba), this protein is Muscarinic m1-toxin3.